The chain runs to 284 residues: 4-hydroxybenzoate octaprenyltransferase (284 aa).

Transmembrane regions (helical) follow at residues I19 to L39, I42 to I62, G85 to I105, V107 to L127, F134 to F154, A165 to L185, I211 to F231, S233 to Y253, and C261 to I281.

Belongs to the UbiA prenyltransferase family. Mg(2+) serves as cofactor.

The protein resides in the cell inner membrane. The catalysed reaction is all-trans-octaprenyl diphosphate + 4-hydroxybenzoate = 4-hydroxy-3-(all-trans-octaprenyl)benzoate + diphosphate. The protein operates within cofactor biosynthesis; ubiquinone biosynthesis. In terms of biological role, catalyzes the prenylation of para-hydroxybenzoate (PHB) with an all-trans polyprenyl group. Mediates the second step in the final reaction sequence of ubiquinone-8 (UQ-8) biosynthesis, which is the condensation of the polyisoprenoid side chain with PHB, generating the first membrane-bound Q intermediate 3-octaprenyl-4-hydroxybenzoate. The sequence is that of 4-hydroxybenzoate octaprenyltransferase from Francisella tularensis subsp. holarctica (strain LVS).